Reading from the N-terminus, the 388-residue chain is Quinolone resistance protein NorA (388 aa).

The next 12 helical transmembrane spans lie at 5 to 25 (IFVL…VIPV), 42 to 62 (LLVA…GTLA), 69 to 89 (LIIC…AVGH), 99 to 119 (VIGG…IADV), 129 to 149 (FGYM…IGGF), 157 to 177 (MPFY…VVLI), 201 to 221 (WKVF…LSAF), 239 to 259 (DISI…IYFF), 269 to 289 (LTFI…LVIA), 293 to 313 (WTIM…RPAI), 331 to 351 (LNST…GALF), and 355 to 375 (IEAP…IVLI).

Belongs to the major facilitator superfamily. TCR/Tet family.

The protein localises to the cell membrane. Its function is as follows. Involved in quinolone resistance. May constitute a membrane-associated active efflux pump of hydrophilic quinolones. This is Quinolone resistance protein NorA (norA) from Staphylococcus aureus (strain MRSA252).